The sequence spans 394 residues: 1-deoxy-D-xylulose 5-phosphate reductoisomerase (394 aa).

Thr-10, Gly-11, Ser-12, Ile-13, Gly-38, Arg-39, Asn-40, and Asn-123 together coordinate NADPH. Lys-124 is a 1-deoxy-D-xylulose 5-phosphate binding site. Glu-125 contacts NADPH. Residue Asp-149 coordinates Mn(2+). 4 residues coordinate 1-deoxy-D-xylulose 5-phosphate: Ser-150, Glu-151, Ser-175, and His-198. Residue Glu-151 coordinates Mn(2+). NADPH is bound at residue Gly-204. Residues Ser-211, Asn-216, Lys-217, and Glu-220 each contribute to the 1-deoxy-D-xylulose 5-phosphate site. Glu-220 provides a ligand contact to Mn(2+).

It belongs to the DXR family. Requires Mg(2+) as cofactor. It depends on Mn(2+) as a cofactor.

It carries out the reaction 2-C-methyl-D-erythritol 4-phosphate + NADP(+) = 1-deoxy-D-xylulose 5-phosphate + NADPH + H(+). The protein operates within isoprenoid biosynthesis; isopentenyl diphosphate biosynthesis via DXP pathway; isopentenyl diphosphate from 1-deoxy-D-xylulose 5-phosphate: step 1/6. Its function is as follows. Catalyzes the NADPH-dependent rearrangement and reduction of 1-deoxy-D-xylulose-5-phosphate (DXP) to 2-C-methyl-D-erythritol 4-phosphate (MEP). This chain is 1-deoxy-D-xylulose 5-phosphate reductoisomerase, found in Cereibacter sphaeroides (strain ATCC 17029 / ATH 2.4.9) (Rhodobacter sphaeroides).